The sequence spans 131 residues: Con-Ins Q1 (131 aa).

Residues 1–24 (MTTSSYFLLVALGLLLYLCQSSFG) form the signal peptide. Disulfide bonds link Cys29/Cys107, Cys41/Cys110, Cys53/Cys123, and Cys109/Cys114. The propeptide at 59–92 (LQGGTDDARKKRGRASLLRKRRGFLSMLKARAKR) is c peptide. 4-carboxyglutamate; partial is present on Glu118. Residue Ser130 is modified to Serine amide.

Belongs to the insulin family. In terms of assembly, heterodimer of A and B chains; disulfide-linked. As to expression, expressed by the venom gland.

The protein resides in the secreted. Its function is as follows. This venom insulin facilitates prey capture by rapidly inducing hypoglycemic shock. Intraperitoneal injection of this peptide into zebrafish lowers blood glucose with the same potency than human insulin. In vivo, when applied to water, this peptide reduces overall locomotor activity of zebrafish larvae, observed as a significant decrease in the percentage of time spent swimming and movement frequency. In Conus quercinus (Oak cone), this protein is Con-Ins Q1.